The chain runs to 497 residues: ATP-dependent RNA helicase HAS1 (497 aa).

Residues 1–23 (MAGNKRVRDAESEQDHAETETVV) form a disordered region. The short motif at 34-62 (GSFSDLKLSDGTMKAIGKMGFTQMTAVQT) is the Q motif element. The Helicase ATP-binding domain occupies 65-241 (IPPLLAGKDV…RISLRPGPLF (177 aa)). 78 to 85 (AKTGSGKT) serves as a coordination point for ATP. The DEAD box motif lies at 188-191 (DEAD). Positions 255–425 (GLEQGYVVCE…NVQAQLEKLI (171 aa)) constitute a Helicase C-terminal domain. The Bipartite nuclear localization signal signature appears at 267–283 (KRFLLLFSFLKRNQKKK).

This sequence belongs to the DEAD box helicase family. DDX18/HAS1 subfamily. Associates in the nucleolus with the 60S and pre-60S ribosomal subunits.

The protein localises to the nucleus. The protein resides in the nucleolus. It catalyses the reaction ATP + H2O = ADP + phosphate + H(+). ATP-dependent RNA helicase involved in 40S ribosomal subunit biogenesis. Required for the processing and cleavage of 35S pre-rRNA at sites A0, A1, and A2, leading to mature 18S rRNA. The chain is ATP-dependent RNA helicase HAS1 (HAS1) from Kluyveromyces lactis (strain ATCC 8585 / CBS 2359 / DSM 70799 / NBRC 1267 / NRRL Y-1140 / WM37) (Yeast).